A 438-amino-acid polypeptide reads, in one-letter code: Coenzyme A disulfide reductase (438 aa).

An FAD-binding site is contributed by 8-33 (GAVAGGATCASQIRRLDKESDIIIFE). Residues Thr-15, Gln-19, Arg-22, Ser-39, and Asn-42 each contribute to the substrate site. Cys-43 (nucleophile) is an active-site residue. The Redox-active role is filled by Cys-43. Substrate is bound at residue Lys-71. 151–166 (VLVVGAGYVSLEVLEN) contributes to the NADP(+) binding site. Position 267 to 277 (267 to 277 (TNVPNIYAIGD)) interacts with FAD. His-299 lines the substrate pocket. Tyr-419 provides a ligand contact to FAD. Lys-427 provides a ligand contact to substrate.

This sequence belongs to the class-III pyridine nucleotide-disulfide oxidoreductase family. Homodimer. The cofactor is FAD.

It carries out the reaction NADP(+) + 2 CoA = CoA-disulfide + NADPH + H(+). Functionally, catalyzes specifically the NADPH-dependent reduction of coenzyme A disulfide. The sequence is that of Coenzyme A disulfide reductase from Staphylococcus aureus (strain COL).